We begin with the raw amino-acid sequence, 186 residues long: UPF0340 protein M6_Spy1622 (186 aa).

It belongs to the UPF0340 family.

The protein is UPF0340 protein M6_Spy1622 of Streptococcus pyogenes serotype M6 (strain ATCC BAA-946 / MGAS10394).